The following is a 372-amino-acid chain: UDP-N-acetylglucosamine--N-acetylmuramyl-(pentapeptide) pyrophosphoryl-undecaprenol N-acetylglucosamine transferase (372 aa).

Residues 15-17 (TGG), Asn-126, Arg-169, Ser-197, and Gln-299 each bind UDP-N-acetyl-alpha-D-glucosamine.

This sequence belongs to the glycosyltransferase 28 family. MurG subfamily.

Its subcellular location is the cell inner membrane. The catalysed reaction is di-trans,octa-cis-undecaprenyl diphospho-N-acetyl-alpha-D-muramoyl-L-alanyl-D-glutamyl-meso-2,6-diaminopimeloyl-D-alanyl-D-alanine + UDP-N-acetyl-alpha-D-glucosamine = di-trans,octa-cis-undecaprenyl diphospho-[N-acetyl-alpha-D-glucosaminyl-(1-&gt;4)]-N-acetyl-alpha-D-muramoyl-L-alanyl-D-glutamyl-meso-2,6-diaminopimeloyl-D-alanyl-D-alanine + UDP + H(+). The protein operates within cell wall biogenesis; peptidoglycan biosynthesis. Functionally, cell wall formation. Catalyzes the transfer of a GlcNAc subunit on undecaprenyl-pyrophosphoryl-MurNAc-pentapeptide (lipid intermediate I) to form undecaprenyl-pyrophosphoryl-MurNAc-(pentapeptide)GlcNAc (lipid intermediate II). The sequence is that of UDP-N-acetylglucosamine--N-acetylmuramyl-(pentapeptide) pyrophosphoryl-undecaprenol N-acetylglucosamine transferase from Methylobacterium sp. (strain 4-46).